We begin with the raw amino-acid sequence, 204 residues long: Methylthioribulose-1-phosphate dehydratase (204 aa).

Residues histidine 94 and histidine 96 each coordinate Zn(2+).

This sequence belongs to the aldolase class II family. MtnB subfamily. Zn(2+) is required as a cofactor.

It carries out the reaction 5-(methylsulfanyl)-D-ribulose 1-phosphate = 5-methylsulfanyl-2,3-dioxopentyl phosphate + H2O. The protein operates within amino-acid biosynthesis; L-methionine biosynthesis via salvage pathway; L-methionine from S-methyl-5-thio-alpha-D-ribose 1-phosphate: step 2/6. Catalyzes the dehydration of methylthioribulose-1-phosphate (MTRu-1-P) into 2,3-diketo-5-methylthiopentyl-1-phosphate (DK-MTP-1-P). The protein is Methylthioribulose-1-phosphate dehydratase of Enterobacter sp. (strain 638).